A 2036-amino-acid polypeptide reads, in one-letter code: Putative mediator of RNA polymerase II transcription subunit 24 (2036 aa).

Disordered regions lie at residues 51–70, 159–184, 212–451, 501–580, 754–840, 928–1124, 1375–1419, and 1565–1608; these read NNNN…NNNV, DNIE…NNIG, SPSP…QTTT, KSVN…NNNN, NLKN…SHQK, NNNN…NKDL, NNKN…NNNN, and NSSA…NGDT. Low complexity predominate over residues 212–229; it reads SPSPSSSSSSSTSPSSQQ. Basic and acidic residues predominate over residues 260 to 270; it reads EIMKVKEEPIK. Low complexity-rich tracts occupy residues 273–291, 300–311, 387–451, 501–539, 547–580, and 754–770; these read TTTT…STTT, TNGNGEETTITT, QPQP…QTTT, KSVN…NSNN, NNNN…NNNN, and NLKN…NSNG. Residues 505 to 584 adopt a coiled-coil conformation; that stretch reads NNNNNNNNNN…NNNNNNINNI (80 aa). The segment covering 778 to 787 has biased composition (polar residues); it reads GSSTDGSNKL. Low complexity-rich tracts occupy residues 788-808 and 928-943; these read SSTN…LNGN and NNNN…NNKN. Residues 943–977 are a coiled coil; the sequence is NKNSKKSNNKNKNNKNNNKKNKNNNNNNNNNNNNN. A compositionally biased stretch (basic residues) spans 944-964; it reads KNSKKSNNKNKNNKNNNKKNK. Composition is skewed to low complexity over residues 965 to 999, 1017 to 1118, 1385 to 1419, 1565 to 1584, and 1594 to 1608; these read NNNN…NNNN, SNNS…NNNN, NSSA…LPKS, and SSNT…NGDT. Residues 1915–1968 adopt a coiled-coil conformation; that stretch reads SKNQSLKKKQKLKQKKQQHNNNNGGEYNIDQDHIEQIQQQQQQYQKQQQQRKDE.

The protein belongs to the Mediator complex subunit 24 family. Component of the Mediator complex.

The protein localises to the nucleus. In terms of biological role, component of the Mediator complex, a coactivator involved in the regulated transcription of nearly all RNA polymerase II-dependent genes. Mediator functions as a bridge to convey information from gene-specific regulatory proteins to the basal RNA polymerase II transcription machinery. Mediator is recruited to promoters by direct interactions with regulatory proteins and serves as a scaffold for the assembly of a functional preinitiation complex with RNA polymerase II and the general transcription factors. This chain is Putative mediator of RNA polymerase II transcription subunit 24 (med24), found in Dictyostelium discoideum (Social amoeba).